The primary structure comprises 759 residues: uncharacterized protein (759 aa).

Disordered regions lie at residues 1–31 (MDGN…TSFQ) and 188–211 (NDEG…PFAN). The segment covering 17–31 (LSPLQTSFPSSTSFQ) has biased composition (low complexity). The segment covering 189-207 (DEGEDVKDNEQDDNIDESD) has biased composition (acidic residues). A run of 10 helical transmembrane segments spans residues 434–454 (YFRT…ILPM), 456–476 (FQGG…VGIL), 486–505 (MYNS…LSRA), 517–537 (FCFS…YIVL), 555–575 (MFYA…GAAL), 597–617 (DKWK…VNQA), 620–640 (SQWP…YFTA), 643–663 (FGSN…LGNI), 670–690 (GVAF…GLAA), and 726–746 (LVMV…ALVV).

The protein belongs to the ThrE exporter (TC 2.A.79) family.

Its subcellular location is the endoplasmic reticulum membrane. This is an uncharacterized protein from Schizosaccharomyces pombe (strain 972 / ATCC 24843) (Fission yeast).